Consider the following 148-residue polypeptide: Probable calcium-binding protein CML7 (148 aa).

3 consecutive EF-hand domains span residues 9 to 44 (EQVA…LGGN), 80 to 115 (PFDR…IGEK), and 116 to 148 (LEPH…IVAK). Ca(2+) is bound by residues D22, D24, D26, R28, E33, D93, D95, S97, T99, and D104.

Potential calcium sensor. The polypeptide is Probable calcium-binding protein CML7 (CML7) (Oryza sativa subsp. japonica (Rice)).